The chain runs to 289 residues: ATP synthase gamma chain (289 aa).

The protein belongs to the ATPase gamma chain family. As to quaternary structure, F-type ATPases have 2 components, CF(1) - the catalytic core - and CF(0) - the membrane proton channel. CF(1) has five subunits: alpha(3), beta(3), gamma(1), delta(1), epsilon(1). CF(0) has three main subunits: a, b and c.

It localises to the cell inner membrane. Its function is as follows. Produces ATP from ADP in the presence of a proton gradient across the membrane. The gamma chain is believed to be important in regulating ATPase activity and the flow of protons through the CF(0) complex. The protein is ATP synthase gamma chain of Coxiella burnetii (strain CbuG_Q212) (Coxiella burnetii (strain Q212)).